The following is a 115-amino-acid chain: Large ribosomal subunit protein bL20 (115 aa).

The protein belongs to the bacterial ribosomal protein bL20 family.

Functionally, binds directly to 23S ribosomal RNA and is necessary for the in vitro assembly process of the 50S ribosomal subunit. It is not involved in the protein synthesizing functions of that subunit. This Synechococcus sp. (strain CC9605) protein is Large ribosomal subunit protein bL20.